The chain runs to 71 residues: Large ribosomal subunit protein bL31 (71 aa).

Zn(2+) is bound by residues Cys-16, Cys-18, Cys-36, and Cys-39.

This sequence belongs to the bacterial ribosomal protein bL31 family. Type A subfamily. Part of the 50S ribosomal subunit. Requires Zn(2+) as cofactor.

In terms of biological role, binds the 23S rRNA. This is Large ribosomal subunit protein bL31 from Pseudothermotoga lettingae (strain ATCC BAA-301 / DSM 14385 / NBRC 107922 / TMO) (Thermotoga lettingae).